We begin with the raw amino-acid sequence, 320 residues long: Aspartate carbamoyltransferase catalytic subunit (320 aa).

The carbamoyl phosphate site is built by R68 and T69. K96 contributes to the L-aspartate binding site. Residues R118, H148, and Q151 each coordinate carbamoyl phosphate. 2 residues coordinate L-aspartate: R181 and R236. Carbamoyl phosphate contacts are provided by G277 and P278.

This sequence belongs to the aspartate/ornithine carbamoyltransferase superfamily. ATCase family. In terms of assembly, heterododecamer (2C3:3R2) of six catalytic PyrB chains organized as two trimers (C3), and six regulatory PyrI chains organized as three dimers (R2).

The enzyme catalyses carbamoyl phosphate + L-aspartate = N-carbamoyl-L-aspartate + phosphate + H(+). It participates in pyrimidine metabolism; UMP biosynthesis via de novo pathway; (S)-dihydroorotate from bicarbonate: step 2/3. Functionally, catalyzes the condensation of carbamoyl phosphate and aspartate to form carbamoyl aspartate and inorganic phosphate, the committed step in the de novo pyrimidine nucleotide biosynthesis pathway. The sequence is that of Aspartate carbamoyltransferase catalytic subunit from Polaromonas sp. (strain JS666 / ATCC BAA-500).